A 449-amino-acid chain; its full sequence is Glutamyl-tRNA reductase (449 aa).

Substrate contacts are provided by residues 58 to 61 (TCNR), Ser-121, 126 to 128 (ETQ), and Gln-132. Cys-59 functions as the Nucleophile in the catalytic mechanism. Residue 203-208 (GLGEMA) participates in NADP(+) binding.

Belongs to the glutamyl-tRNA reductase family. As to quaternary structure, homodimer.

It carries out the reaction (S)-4-amino-5-oxopentanoate + tRNA(Glu) + NADP(+) = L-glutamyl-tRNA(Glu) + NADPH + H(+). It participates in porphyrin-containing compound metabolism; protoporphyrin-IX biosynthesis; 5-aminolevulinate from L-glutamyl-tRNA(Glu): step 1/2. In terms of biological role, catalyzes the NADPH-dependent reduction of glutamyl-tRNA(Glu) to glutamate 1-semialdehyde (GSA). The polypeptide is Glutamyl-tRNA reductase (Helicobacter pylori (strain Shi470)).